Consider the following 186-residue polypeptide: Ribosome-recycling factor (186 aa).

This sequence belongs to the RRF family.

The protein resides in the cytoplasm. Responsible for the release of ribosomes from messenger RNA at the termination of protein biosynthesis. May increase the efficiency of translation by recycling ribosomes from one round of translation to another. The polypeptide is Ribosome-recycling factor (Rubrobacter xylanophilus (strain DSM 9941 / JCM 11954 / NBRC 16129 / PRD-1)).